The following is a 283-amino-acid chain: 2-dehydro-3-deoxyphosphooctonate aldolase (283 aa).

Belongs to the KdsA family.

It localises to the cytoplasm. The enzyme catalyses D-arabinose 5-phosphate + phosphoenolpyruvate + H2O = 3-deoxy-alpha-D-manno-2-octulosonate-8-phosphate + phosphate. It functions in the pathway carbohydrate biosynthesis; 3-deoxy-D-manno-octulosonate biosynthesis; 3-deoxy-D-manno-octulosonate from D-ribulose 5-phosphate: step 2/3. It participates in bacterial outer membrane biogenesis; lipopolysaccharide biosynthesis. In Laribacter hongkongensis (strain HLHK9), this protein is 2-dehydro-3-deoxyphosphooctonate aldolase.